The primary structure comprises 233 residues: Purine nucleoside phosphorylase DeoD-type (233 aa).

His4 is a binding site for a purine D-ribonucleoside. Phosphate is bound by residues Gly20, Arg24, Arg43, and 87–90 (RVGT). A purine D-ribonucleoside is bound by residues 178-180 (EME) and 202-203 (SD). Residue Asp203 is the Proton donor of the active site.

It belongs to the PNP/UDP phosphorylase family. In terms of assembly, homohexamer; trimer of homodimers.

It catalyses the reaction a purine D-ribonucleoside + phosphate = a purine nucleobase + alpha-D-ribose 1-phosphate. It carries out the reaction a purine 2'-deoxy-D-ribonucleoside + phosphate = a purine nucleobase + 2-deoxy-alpha-D-ribose 1-phosphate. In terms of biological role, catalyzes the reversible phosphorolytic breakdown of the N-glycosidic bond in the beta-(deoxy)ribonucleoside molecules, with the formation of the corresponding free purine bases and pentose-1-phosphate. This is Purine nucleoside phosphorylase DeoD-type from Listeria innocua serovar 6a (strain ATCC BAA-680 / CLIP 11262).